Reading from the N-terminus, the 479-residue chain is Protein phosphatase 1B (479 aa).

The span at 1–14 (MGAFLDKPKTEKHN) shows a compositional bias: basic and acidic residues. Positions 1-20 (MGAFLDKPKTEKHNAHGAGN) are disordered. Gly2 is lipidated: N-myristoyl glycine. Lys12 is covalently cross-linked (Glycyl lysine isopeptide (Lys-Gly) (interchain with G-Cter in ISG15)). Residues 23–295 (RYGLSSMQGW…DNMSIVLVCF (273 aa)) enclose the PPM-type phosphatase domain. Residues Asp60 and Gly61 each contribute to the Mn(2+) site. Lys142 participates in a covalent cross-link: Glycyl lysine isopeptide (Lys-Gly) (interchain with G-Cter in ISG15). Mn(2+) is bound by residues Asp243 and Asp286. A Phosphoserine modification is found at Ser386. The tract at residues 423–479 (VEGEESPAEPAATATSSNSDAGNPVTMQESHTESESGLAELDSSNEDAGTKMSGEKI) is disordered. Positions 430–439 (AEPAATATSS) are enriched in low complexity. Positions 440–451 (NSDAGNPVTMQE) are enriched in polar residues.

Belongs to the PP2C family. In terms of assembly, monomer. Interacts with PAK6. Interacts with the phosphorylated form of IKBKB/IKKB. Mg(2+) is required as a cofactor. Mn(2+) serves as cofactor. Post-translationally, isgylation negatively regulates its activity. In terms of processing, N-myristoylation is essential for the recognition of its substrates for dephosphorylation. In terms of tissue distribution, highly expressed in heart and skeletal muscle.

It localises to the cytoplasm. Its subcellular location is the cytosol. It is found in the membrane. It carries out the reaction O-phospho-L-seryl-[protein] + H2O = L-seryl-[protein] + phosphate. The enzyme catalyses O-phospho-L-threonyl-[protein] + H2O = L-threonyl-[protein] + phosphate. Functionally, enzyme with a broad specificity. Dephosphorylates CDK2 and CDK6 in vitro. Dephosphorylates PRKAA1 and PRKAA2. Inhibits TBK1-mediated antiviral signaling by dephosphorylating it at 'Ser-172'. Plays an important role in the termination of TNF-alpha-mediated NF-kappa-B activation through dephosphorylating and inactivating IKBKB/IKKB. The polypeptide is Protein phosphatase 1B (PPM1B) (Homo sapiens (Human)).